A 308-amino-acid chain; its full sequence is uncharacterized protein (308 aa).

NADP(+) is bound by residues L50, D90, N117, Y182, K186, I222, and T224. Y182 (proton acceptor) is an active-site residue. K186 functions as the Lowers pKa of active site Tyr in the catalytic mechanism.

The protein belongs to the short-chain dehydrogenases/reductases (SDR) family.

This is an uncharacterized protein from Saccharomyces cerevisiae (strain ATCC 204508 / S288c) (Baker's yeast).